The chain runs to 329 residues: Mitochondrial substrate carrier family protein Q (329 aa).

3 Solcar repeats span residues 18-115 (VEAL…LKSI), 125-206 (LGTI…LRAL), and 216-310 (LGGL…VVIH). The next 6 membrane-spanning stretches (helical) occupy residues 21–41 (LGHAISGGVAGMAAIALTYPF), 95–115 (LIGIGASSFVYYYWYTLLKSI), 131–151 (LAIAALAGCANVLTTLPIWVV), 175–195 (GFGGLYKGLIPALILVSNPSV), 221–241 (VFILGAIAKLIAGIVTYPYLL), and 298–318 (AFMFLVKDKVVIHAVAILFYL).

This sequence belongs to the mitochondrial carrier (TC 2.A.29) family.

It localises to the peroxisome membrane. May have transport activity. The chain is Mitochondrial substrate carrier family protein Q (mcfQ) from Dictyostelium discoideum (Social amoeba).